Reading from the N-terminus, the 383-residue chain is Neuropeptide Y receptor type 1 (383 aa).

Residues 1 to 34 (MNSTSFSQLENHSVHYNLSEEKPSFFAFENDDCH) are Extracellular-facing. Residues Asn-2, Asn-11, and Asn-17 are each glycosylated (N-linked (GlcNAc...) asparagine). The helical transmembrane segment at 35–55 (LPLAVIFTLALAYGAVIILGV) threads the bilayer. Over 56-87 (SGNLALILIILKQKEMRNVTNILIVNLSFSDL) the chain is Cytoplasmic. A helical transmembrane segment spans residues 88 to 108 (LVAIMCLPFTFVYTLMDHWIF). The Extracellular portion of the chain corresponds to 109–116 (GEIMCKLN). A disulfide bridge links Cys-113 with Cys-198. The chain crosses the membrane as a helical span at residues 117 to 137 (PFVQCVSITVSIFSLVLIAVE). Residues 138–154 (RHQLIINPRGWRPNNRH) are Cytoplasmic-facing. The chain crosses the membrane as a helical span at residues 155 to 175 (AYIGIAVIWVLAVASSLPFMI). The Extracellular segment spans residues 176-211 (YQVLTDEPFQNVTLDAFKDKLVCFDQFPSDSHRLSY). Residues 212–232 (TTLLLVLQYFGPLCFIFICYF) traverse the membrane as a helical segment. The Cytoplasmic segment spans residues 233–260 (KIYIRLKRRNNMMDKMRDSKYRSSESKR). The chain crosses the membrane as a helical span at residues 261–281 (INIMLLSIVVAFAVCWLPLTI). Topologically, residues 282–299 (FNTVFDWNHQIIATCNHN) are extracellular. A helical transmembrane segment spans residues 300–320 (LLFLLCHLTAMISTCVNPIFY). At 321–383 (GFLNKNFQRD…KISCVENEKI (63 aa)) the chain is on the cytoplasmic side. A lipid anchor (S-palmitoyl cysteine) is attached at Cys-338. 2 positions are modified to phosphoserine: Ser-368 and Ser-376.

It belongs to the G-protein coupled receptor 1 family.

The protein localises to the cell membrane. Receptor for neuropeptide Y and peptide YY. This chain is Neuropeptide Y receptor type 1 (NPY1R), found in Cavia porcellus (Guinea pig).